A 431-amino-acid chain; its full sequence is Enolase (431 aa).

Glutamine 167 is a (2R)-2-phosphoglycerate binding site. Catalysis depends on glutamate 209, which acts as the Proton donor. Positions 246, 289, and 316 each coordinate Mg(2+). Positions 341, 370, 371, and 392 each coordinate (2R)-2-phosphoglycerate. Lysine 341 functions as the Proton acceptor in the catalytic mechanism.

This sequence belongs to the enolase family. As to quaternary structure, component of the RNA degradosome, a multiprotein complex involved in RNA processing and mRNA degradation. The cofactor is Mg(2+).

Its subcellular location is the cytoplasm. It localises to the secreted. It is found in the cell surface. It carries out the reaction (2R)-2-phosphoglycerate = phosphoenolpyruvate + H2O. It participates in carbohydrate degradation; glycolysis; pyruvate from D-glyceraldehyde 3-phosphate: step 4/5. Its function is as follows. Catalyzes the reversible conversion of 2-phosphoglycerate (2-PG) into phosphoenolpyruvate (PEP). It is essential for the degradation of carbohydrates via glycolysis. This chain is Enolase, found in Shewanella sp. (strain ANA-3).